Consider the following 251-residue polypeptide: Developmental protein SEPALLATA 3 (251 aa).

In terms of domain architecture, MADS-box spans 3-57; sequence RGRVELKRIENKINRQVTFAKRRNGLLKKAYELSVLCDAEVALIIFSNRGKLYEF. The 91-residue stretch at 91-181 folds into the K-box domain; sequence ELSSQQEYLK…RLRLADGYQM (91 aa). A coiled-coil region spans residues 94 to 177; that stretch reads SQQEYLKLKE…NKTLRLRLAD (84 aa).

In terms of assembly, forms homodimers. Heterodimer with AP1 or AG capable of binding to CArG-box sequences. Binds AP3/PI to form a ternary complex. Interacts with AGL16. Interacts with TT16/AGL32.

It is found in the nucleus. Probable transcription factor active in inflorescence development and floral organogenesis. Functions with SEPALLATA1/AGL2 and SEPALLATA2/AGL4 to ensure proper development of petals, stamens and carpels and to prevent the indeterminate growth of the flower meristem. Interacts with APETALA1, AGAMOUS or APETALA3/PISTILLATA to form complexes, that could be involved in genes regulation during floral meristem development. Binds specifically to the CArG box DNA sequence 5'-CC (A/T)6 GG-3'. This is Developmental protein SEPALLATA 3 (SEP3) from Arabidopsis thaliana (Mouse-ear cress).